Consider the following 294-residue polypeptide: Acetyl-coenzyme A carboxylase carboxyl transferase subunit beta (294 aa).

Residues 25-294 (IWTKCDNCGQ…PKVDYRHCVE (270 aa)) form the CoA carboxyltransferase N-terminal domain. Cys29, Cys32, Cys48, and Cys51 together coordinate Zn(2+). The segment at 29–51 (CDNCGQLLYKKELERNLEVCPKC) adopts a C4-type zinc-finger fold.

The protein belongs to the AccD/PCCB family. As to quaternary structure, acetyl-CoA carboxylase is a heterohexamer composed of biotin carboxyl carrier protein (AccB), biotin carboxylase (AccC) and two subunits each of ACCase subunit alpha (AccA) and ACCase subunit beta (AccD). Zn(2+) is required as a cofactor.

It localises to the cytoplasm. It catalyses the reaction N(6)-carboxybiotinyl-L-lysyl-[protein] + acetyl-CoA = N(6)-biotinyl-L-lysyl-[protein] + malonyl-CoA. The protein operates within lipid metabolism; malonyl-CoA biosynthesis; malonyl-CoA from acetyl-CoA: step 1/1. Its function is as follows. Component of the acetyl coenzyme A carboxylase (ACC) complex. Biotin carboxylase (BC) catalyzes the carboxylation of biotin on its carrier protein (BCCP) and then the CO(2) group is transferred by the transcarboxylase to acetyl-CoA to form malonyl-CoA. The protein is Acetyl-coenzyme A carboxylase carboxyl transferase subunit beta of Blochmanniella pennsylvanica (strain BPEN).